The chain runs to 400 residues: Tryptophan synthase beta chain (400 aa).

Lysine 90 is subject to N6-(pyridoxal phosphate)lysine.

This sequence belongs to the TrpB family. As to quaternary structure, tetramer of two alpha and two beta chains. It depends on pyridoxal 5'-phosphate as a cofactor.

It catalyses the reaction (1S,2R)-1-C-(indol-3-yl)glycerol 3-phosphate + L-serine = D-glyceraldehyde 3-phosphate + L-tryptophan + H2O. The protein operates within amino-acid biosynthesis; L-tryptophan biosynthesis; L-tryptophan from chorismate: step 5/5. In terms of biological role, the beta subunit is responsible for the synthesis of L-tryptophan from indole and L-serine. This Bacillus velezensis (strain DSM 23117 / BGSC 10A6 / LMG 26770 / FZB42) (Bacillus amyloliquefaciens subsp. plantarum) protein is Tryptophan synthase beta chain.